The chain runs to 272 residues: SWIRM domain-containing protein laf2 (272 aa).

The tract at residues 86-148 (HVGRWANRHS…RRRKSARGNG (63 aa)) is disordered. Composition is skewed to low complexity over residues 95–120 (SNVS…SYSG) and 127–136 (RSISSSPSTI). Phosphoserine occurs at positions 130 and 132. Residue threonine 135 is modified to Phosphothreonine. An SWIRM domain is found at 182–272 (LKAEWKGPPL…AFHEVGFFDD (91 aa)).

In terms of assembly, component of the RPD3C(L) complex.

The protein resides in the nucleus. Functionally, component of the RPD3C(L) histone deacetylase complex (HDAC) responsible for the deacetylation of lysine residues on the N-terminal part of the core histones (H2A, H2B, H3 and H4). Histone deacetylation gives a tag for epigenetic repression and plays an important role in transcriptional regulation, cell cycle progression and developmental events. This Schizosaccharomyces pombe (strain 972 / ATCC 24843) (Fission yeast) protein is SWIRM domain-containing protein laf2 (laf2).